We begin with the raw amino-acid sequence, 450 residues long: UDP-N-acetylmuramoylalanine--D-glutamate ligase (450 aa).

Position 119–125 (glycine 119–threonine 125) interacts with ATP.

The protein belongs to the MurCDEF family.

Its subcellular location is the cytoplasm. It carries out the reaction UDP-N-acetyl-alpha-D-muramoyl-L-alanine + D-glutamate + ATP = UDP-N-acetyl-alpha-D-muramoyl-L-alanyl-D-glutamate + ADP + phosphate + H(+). The protein operates within cell wall biogenesis; peptidoglycan biosynthesis. Functionally, cell wall formation. Catalyzes the addition of glutamate to the nucleotide precursor UDP-N-acetylmuramoyl-L-alanine (UMA). This chain is UDP-N-acetylmuramoylalanine--D-glutamate ligase, found in Streptococcus gordonii (strain Challis / ATCC 35105 / BCRC 15272 / CH1 / DL1 / V288).